Consider the following 1356-residue polypeptide: Fibronectin type III domain containing protein 3C1 (1356 aa).

3 disordered regions span residues 303 to 341 (PRNM…SDNN), 356 to 402 (TYDE…SDVA), and 428 to 452 (NQKK…QPGC). Over residues 308-341 (DNIPDTNTTDTITSSSAHTPSISTSNATFCSDNN) the composition is skewed to low complexity. Positions 370–393 (PSCTSQSASNPSVSENAHNPSSIN) are enriched in polar residues. A compositionally biased stretch (basic and acidic residues) spans 439–448 (LKEHNTEDRT). 4 Fibronectin type-III domains span residues 454 to 549 (NIEK…TPGC), 553 to 648 (PPLA…TPPA), 650 to 741 (LPPK…TRPA), and 745 to 842 (CPNK…TLPP). Over residues 825–838 (GQSRPSDVLTIQTP) the composition is skewed to polar residues. The segment at 825–894 (GQSRPSDVLT…QDRKVHPSSE (70 aa)) is disordered. Residues 883-894 (PHQDRKVHPSSE) are compositionally biased toward basic and acidic residues. Fibronectin type-III domains are found at residues 914 to 1007 (PPSQ…TPGT), 1017 to 1103 (EVES…TKPL), 1104 to 1199 (PPEP…TKSP), and 1202 to 1299 (ALKA…TYKH). Positions 1299 to 1320 (HHSGHGKGSGSKGKGNHNDKGE) are disordered. Residues 1330–1350 (TFVLTLLIGFALIAVLCAVAV) form a helical membrane-spanning segment. Over 1351–1356 (QYLLIN) the chain is Cytoplasmic.

The protein belongs to the FNDC3 family.

The protein resides in the membrane. The sequence is that of Fibronectin type III domain containing protein 3C1 (Fndc3c1) from Mus musculus (Mouse).